Here is a 349-residue protein sequence, read N- to C-terminus: Ribosomal RNA large subunit methyltransferase M (349 aa).

Residues 216-219, aspartate 235, aspartate 255, and aspartate 271 contribute to the S-adenosyl-L-methionine site; that span reads APGG. Lysine 300 serves as the catalytic Proton acceptor.

This sequence belongs to the class I-like SAM-binding methyltransferase superfamily. RNA methyltransferase RlmE family. RlmM subfamily. In terms of assembly, monomer.

The protein localises to the cytoplasm. It carries out the reaction cytidine(2498) in 23S rRNA + S-adenosyl-L-methionine = 2'-O-methylcytidine(2498) in 23S rRNA + S-adenosyl-L-homocysteine + H(+). In terms of biological role, catalyzes the 2'-O-methylation at nucleotide C2498 in 23S rRNA. The sequence is that of Ribosomal RNA large subunit methyltransferase M from Saccharophagus degradans (strain 2-40 / ATCC 43961 / DSM 17024).